The sequence spans 148 residues: Nucleoside diphosphate kinase (148 aa).

6 residues coordinate ATP: Lys9, Phe57, Arg85, Thr91, Arg102, and Asn112. Thr91 carries the post-translational modification Phosphothreonine. The active-site Pros-phosphohistidine intermediate is His115. Position 122 is a phosphoserine (Ser122).

It belongs to the NDK family. As to quaternary structure, homotetramer. Mg(2+) serves as cofactor.

The protein localises to the cytoplasm. It catalyses the reaction a 2'-deoxyribonucleoside 5'-diphosphate + ATP = a 2'-deoxyribonucleoside 5'-triphosphate + ADP. The catalysed reaction is a ribonucleoside 5'-diphosphate + ATP = a ribonucleoside 5'-triphosphate + ADP. In terms of biological role, major role in the synthesis of nucleoside triphosphates other than ATP. The ATP gamma phosphate is transferred to the NDP beta phosphate via a ping-pong mechanism, using a phosphorylated active-site intermediate. The chain is Nucleoside diphosphate kinase from Bacillus cereus (strain ATCC 10987 / NRS 248).